The following is a 159-amino-acid chain: MNLTLNLIQLQTIEMRVHMDCVGCESRVKNALQKMRGVDAVEIDMVQQKVTVTGYADQKKVLKKVRKTGRRAELWQLPYNPDHMGGSSSNGGYFYNPQGCNGPINHAAPVPTSSYNYYKHGYDSNDYSSYRHHPVHASIFSHQTGSKFSDENPNACSIM.

The 64-residue stretch at 10-73 (LQTIEMRVHM…KVRKTGRRAE (64 aa)) folds into the HMA domain. Cys21 and Cys24 together coordinate a metal cation. A Cysteine methyl ester modification is found at Cys156. The S-farnesyl cysteine moiety is linked to residue Cys156. The propeptide at 157–159 (SIM) is removed in mature form.

This sequence belongs to the HIPP family.

Functionally, heavy-metal-binding protein. The chain is Heavy metal-associated isoprenylated plant protein 28 from Arabidopsis thaliana (Mouse-ear cress).